Here is a 132-residue protein sequence, read N- to C-terminus: Chemokine-like protein TAFA-5 (132 aa).

The first 43 residues, 1–43 (MAPSPRTGSRQDATALPSMSSTFWAFMILASLLIAYCSQLAAG), serve as a signal peptide directing secretion. Residue N113 is glycosylated (N-linked (GlcNAc...) asparagine).

This sequence belongs to the TAFA family.

Its subcellular location is the secreted. Its function is as follows. Acts as a chemokine-like protein by regulating cell proliferation and migration through activation of G protein-coupled receptors (GPCRs), such as S1PR2 and FPR2. Stimulates chemotactic migration of macrophages mediated by the MAPK3/ERK1 and AKT1 pathway. Blocks TNFSF11/RANKL-induced osteoclast formation from macrophages by inhibiting up-regulation of osteoclast fusogenic and differentiation genes. Stimulation of macrophage migration and inhibition of osteoclast formation is mediated through the GPCR FPR2. Acts as an adipokine by negatively regulating vascular smooth muscle cell (VSMC) proliferation and migration in response to platelet-derived growth factor stimulation via GPCR S1PR2 and G protein GNA12/GNA13-transmitted RHOA signaling. Inhibits injury-induced cell proliferation and neointima formation in the femoral arteries. In Bos taurus (Bovine), this protein is Chemokine-like protein TAFA-5 (TAFA5).